We begin with the raw amino-acid sequence, 213 residues long: Pyridoxine/pyridoxamine 5'-phosphate oxidase (213 aa).

FMN-binding positions include 60-65, 75-76, Lys82, and Gln104; these read RMVLMK and YS. A substrate-binding site is contributed by Lys65. Residues Tyr122 and Arg126 each coordinate substrate. Residues 139–140 and Trp184 contribute to the FMN site; that span reads QS. 190–192 is a binding site for substrate; that stretch reads RLH. Arg194 is an FMN binding site.

The protein belongs to the pyridoxamine 5'-phosphate oxidase family. Homodimer. FMN is required as a cofactor.

It carries out the reaction pyridoxamine 5'-phosphate + O2 + H2O = pyridoxal 5'-phosphate + H2O2 + NH4(+). It catalyses the reaction pyridoxine 5'-phosphate + O2 = pyridoxal 5'-phosphate + H2O2. Its pathway is cofactor metabolism; pyridoxal 5'-phosphate salvage; pyridoxal 5'-phosphate from pyridoxamine 5'-phosphate: step 1/1. It functions in the pathway cofactor metabolism; pyridoxal 5'-phosphate salvage; pyridoxal 5'-phosphate from pyridoxine 5'-phosphate: step 1/1. Catalyzes the oxidation of either pyridoxine 5'-phosphate (PNP) or pyridoxamine 5'-phosphate (PMP) into pyridoxal 5'-phosphate (PLP). This Nitrobacter hamburgensis (strain DSM 10229 / NCIMB 13809 / X14) protein is Pyridoxine/pyridoxamine 5'-phosphate oxidase.